Reading from the N-terminus, the 403-residue chain is Soluble calcium-activated nucleotidase 1 (403 aa).

At 1–44 the chain is on the cytoplasmic side; it reads MPIQPFDQREWNEPMHSLRISVGGLPVLASMTKATDPRFRPRWR. Residues 45-61 traverse the membrane as a helical; Signal-anchor for type II membrane protein segment; it reads VILTSFVGAALLWLLYS. Topologically, residues 62-403 are lumenal; that stretch reads HHQTPVSGRP…SVKYEGIEFI (342 aa). Asparagine 90 carries N-linked (GlcNAc...) asparagine glycosylation. Residues serine 170, aspartate 171, glutamate 217, glutamate 286, serine 347, and glutamate 398 each contribute to the Ca(2+) site.

This sequence belongs to the apyrase family. As to quaternary structure, monomer. Homodimer; dimerization is Ca(2+)-dependent. Ca(2+) serves as cofactor. As to expression, detected in intestine, thymus, heart, lung, spleen, kidney, liver, testis, skeletal muscle and brain.

It is found in the endoplasmic reticulum membrane. Its subcellular location is the golgi apparatus. It localises to the golgi stack membrane. The enzyme catalyses a ribonucleoside 5'-diphosphate + H2O = a ribonucleoside 5'-phosphate + phosphate + H(+). Functionally, calcium-dependent nucleotidase with a preference for UDP. The order of activity with different substrates is UDP &gt; GDP &gt; IDP &gt;&gt; UTP &gt; CDP = GTP = ITP. Has very low activity towards ADP and even lower activity towards ATP. Does not hydrolyze AMP and GMP. Involved in proteoglycan synthesis. The polypeptide is Soluble calcium-activated nucleotidase 1 (Cant1) (Rattus norvegicus (Rat)).